The primary structure comprises 264 residues: Phosphonoacetaldehyde hydrolase (264 aa).

The active-site Nucleophile is aspartate 9. Mg(2+) is bound by residues aspartate 9 and alanine 11. The active-site Schiff-base intermediate with substrate is lysine 50. A Mg(2+)-binding site is contributed by aspartate 183.

The protein belongs to the HAD-like hydrolase superfamily. PhnX family. Homodimer. Mg(2+) serves as cofactor.

It catalyses the reaction phosphonoacetaldehyde + H2O = acetaldehyde + phosphate + H(+). Its function is as follows. Involved in phosphonate degradation. The chain is Phosphonoacetaldehyde hydrolase from Bacillus cereus (strain ATCC 10987 / NRS 248).